Reading from the N-terminus, the 361-residue chain is Tyrosine--tRNA ligase (361 aa).

Tyr-36, Tyr-162, Gln-166, Asp-169, and Gln-184 together coordinate L-tyrosine. A 'KMSKS' region motif is present at residues 236-240 (KMSKS). Lys-239 lines the ATP pocket.

This sequence belongs to the class-I aminoacyl-tRNA synthetase family. TyrS type 4 subfamily. As to quaternary structure, homodimer.

The protein resides in the cytoplasm. It catalyses the reaction tRNA(Tyr) + L-tyrosine + ATP = L-tyrosyl-tRNA(Tyr) + AMP + diphosphate + H(+). Functionally, catalyzes the attachment of tyrosine to tRNA(Tyr) in a two-step reaction: tyrosine is first activated by ATP to form Tyr-AMP and then transferred to the acceptor end of tRNA(Tyr). This is Tyrosine--tRNA ligase from Saccharolobus islandicus (strain M.14.25 / Kamchatka #1) (Sulfolobus islandicus).